The chain runs to 125 residues: Putative iron-sulfur cluster insertion protein ErpA 2 (125 aa).

Iron-sulfur cluster-binding residues include cysteine 53, cysteine 117, and cysteine 119.

Belongs to the HesB/IscA family. Homodimer. Iron-sulfur cluster serves as cofactor.

Functionally, required for insertion of 4Fe-4S clusters. The chain is Putative iron-sulfur cluster insertion protein ErpA 2 from Polaromonas naphthalenivorans (strain CJ2).